Consider the following 876-residue polypeptide: Translation initiation factor IF-2 (876 aa).

One can recognise a tr-type G domain in the interval 378 to 547; sequence TRPPIITIMG…LTQSEMLELK (170 aa). The interval 387–394 is G1; the sequence is GHVDHGKT. Residue 387-394 participates in GTP binding; it reads GHVDHGKT. The interval 412–416 is G2; the sequence is RITQH. A G3 region spans residues 433-436; sequence DTPG. Residues 433–437 and 487–490 contribute to the GTP site; these read DTPGH and NKID. The segment at 487 to 490 is G4; it reads NKID. A G5 region spans residues 523 to 525; it reads SAK.

Belongs to the TRAFAC class translation factor GTPase superfamily. Classic translation factor GTPase family. IF-2 subfamily.

It is found in the cytoplasm. One of the essential components for the initiation of protein synthesis. Protects formylmethionyl-tRNA from spontaneous hydrolysis and promotes its binding to the 30S ribosomal subunits. Also involved in the hydrolysis of GTP during the formation of the 70S ribosomal complex. The polypeptide is Translation initiation factor IF-2 (Buchnera aphidicola subsp. Baizongia pistaciae (strain Bp)).